The chain runs to 262 residues: Acyl-[acyl-carrier-protein]--UDP-N-acetylglucosamine O-acyltransferase (262 aa).

It belongs to the transferase hexapeptide repeat family. LpxA subfamily. In terms of assembly, homotrimer.

Its subcellular location is the cytoplasm. It catalyses the reaction a (3R)-hydroxyacyl-[ACP] + UDP-N-acetyl-alpha-D-glucosamine = a UDP-3-O-[(3R)-3-hydroxyacyl]-N-acetyl-alpha-D-glucosamine + holo-[ACP]. The protein operates within glycolipid biosynthesis; lipid IV(A) biosynthesis; lipid IV(A) from (3R)-3-hydroxytetradecanoyl-[acyl-carrier-protein] and UDP-N-acetyl-alpha-D-glucosamine: step 1/6. Functionally, involved in the biosynthesis of lipid A, a phosphorylated glycolipid that anchors the lipopolysaccharide to the outer membrane of the cell. The protein is Acyl-[acyl-carrier-protein]--UDP-N-acetylglucosamine O-acyltransferase of Burkholderia lata (strain ATCC 17760 / DSM 23089 / LMG 22485 / NCIMB 9086 / R18194 / 383).